The chain runs to 79 residues: Large ribosomal subunit protein uL29 (79 aa).

Belongs to the universal ribosomal protein uL29 family.

The sequence is that of Large ribosomal subunit protein uL29 from Nocardia farcinica (strain IFM 10152).